The sequence spans 287 residues: Pyridoxal 5'-phosphate synthase subunit PdxS (287 aa).

D21 contributes to the D-ribose 5-phosphate binding site. The active-site Schiff-base intermediate with D-ribose 5-phosphate is the K78. D-ribose 5-phosphate is bound at residue G150. R162 is a D-glyceraldehyde 3-phosphate binding site. D-ribose 5-phosphate contacts are provided by residues G211 and 232–233; that span reads GS.

This sequence belongs to the PdxS/SNZ family. In terms of assembly, in the presence of PdxT, forms a dodecamer of heterodimers.

It carries out the reaction aldehydo-D-ribose 5-phosphate + D-glyceraldehyde 3-phosphate + L-glutamine = pyridoxal 5'-phosphate + L-glutamate + phosphate + 3 H2O + H(+). It participates in cofactor biosynthesis; pyridoxal 5'-phosphate biosynthesis. Functionally, catalyzes the formation of pyridoxal 5'-phosphate from ribose 5-phosphate (RBP), glyceraldehyde 3-phosphate (G3P) and ammonia. The ammonia is provided by the PdxT subunit. Can also use ribulose 5-phosphate and dihydroxyacetone phosphate as substrates, resulting from enzyme-catalyzed isomerization of RBP and G3P, respectively. This chain is Pyridoxal 5'-phosphate synthase subunit PdxS, found in Francisella philomiragia subsp. philomiragia (strain ATCC 25017 / CCUG 19701 / FSC 153 / O#319-036).